We begin with the raw amino-acid sequence, 539 residues long: Carboxysome assembly protein CcmM (539 aa).

The carbonic anhydrase-like domain stretch occupies residues 1-214; it reads MPSPTTVPVA…PLRPSSSEAT (214 aa). The segment at 194 to 213 is disordered; the sequence is TADFHSTPTPSPLRPSSSEA. One copy of the RbcS-like repeat 1, SSUL1 repeat lies at 226-397; sequence SSEVITQVRS…VLAELENCLS (172 aa). 2 disulfides stabilise this stretch: Cys261–Cys279 and Cys377–Cys395. Residues 341–425 form a RbcS-like repeat 2, SSUL2 repeat; the sequence is LSAEVVNKVR…RVFEALIQDP (85 aa). The interval 427–459 is disordered; that stretch reads GPVGSAKAAAAPVSSATPSSHSYTSNGSSSSDV. Low complexity predominate over residues 431 to 457; it reads SAKAAAAPVSSATPSSHSYTSNGSSSS. A RbcS-like repeat 3, SSUL3 repeat occupies 453–539; it reads GSSSSDVAGQ…RVAELLIQKP (87 aa).

It belongs to the gamma-class carbonic anhydrase family. In terms of assembly, probably a homotrimer. Purifies from carboxysomes in complex with both RuBisCO subunits and carbonic anhydrase (ccaA); the complex is probably associated with the carboxysome shell. Interacts with CcmN. Binds holo-RuBisCO (RbcL(8)-RbcS(8)) via its SSUL domains; the SSUL domain binds close to the equitorial domain of RuBisCO between RbcL dimers, with 1 M35 protein per dimer. The short form purifies from carboxysomes in complex with both RuBisCO subunits; the complex is probably associated with the carboxysome shell. Identified as 2 proteins of 58 and 38 kDa by mass spectrometry, called M58 and M35, the shorter protein is translated starting at Val-216. Protease inhibitors do not alter the appearance of M35. In isolated carboxysomes M35 is 4-5 fold more abundant. The first amino acid (equivalent to Val-216) is not seen in Edman degradation, while Tyr-219 and Gln-222 may be post-translationally modified.

It is found in the carboxysome. In terms of biological role, functions as a scaffold protein for the assembly of beta-carboxysomes, initiates carboxysome assembly by coalescing RuBisCO (ribulose bisphosphate carboxylase, rbcL-rbcS). Produced as a full-length (M58) and a shorter form (M35); both forms are required for correct carboxysome assembly and growth. The short form is more abundant. Despite its strong similarity to gamma-class carbonic anhydrase (CA) it does not have detectable CA activity. The M35 isoform is able to condense RuBisCO into a liquid matrix; the presence of disulfide bonds in M35 reduces affinity for RuBisCO, while mutating all 4 Cys to Ser causes a 4-fold increase in doubling time, more than 15% increase in CO(2) requirement, and abnormal carboxysomes. Functionally, beta-carboxysome assembly initiates when soluble RuBisCO is condensed into a liquid matrix in a pre-carboxysome by the RbcS-like domains of probably both CcmM58 and CcmM35. CcmN interacts with the N-terminus of CcmM58, and then recruits the CcmK2 major shell protein plus other less abundant CcmK proteins via CcmN's encapsulation peptide. Shell formation requires CcmK proteins and CcmO. CcmL caps the otherwise elongated carboxysome. Once fully encapsulated carboxysomes are formed, they migrate within the cell probably via interactions with the cytoskeleton. This is Carboxysome assembly protein CcmM from Synechococcus elongatus (strain ATCC 33912 / PCC 7942 / FACHB-805) (Anacystis nidulans R2).